Reading from the N-terminus, the 497-residue chain is Glutamyl-tRNA(Gln) amidotransferase subunit A (497 aa).

Active-site charge relay system residues include Lys91 and Ser166. The tract at residues 143-171 (SSTENSAYGPTHNPWDLERTAGGSGGGSS) is disordered. Catalysis depends on Ser190, which acts as the Acyl-ester intermediate.

This sequence belongs to the amidase family. GatA subfamily. In terms of assembly, heterotrimer of A, B and C subunits.

It carries out the reaction L-glutamyl-tRNA(Gln) + L-glutamine + ATP + H2O = L-glutaminyl-tRNA(Gln) + L-glutamate + ADP + phosphate + H(+). Functionally, allows the formation of correctly charged Gln-tRNA(Gln) through the transamidation of misacylated Glu-tRNA(Gln) in organisms which lack glutaminyl-tRNA synthetase. The reaction takes place in the presence of glutamine and ATP through an activated gamma-phospho-Glu-tRNA(Gln). The sequence is that of Glutamyl-tRNA(Gln) amidotransferase subunit A from Corynebacterium glutamicum (strain ATCC 13032 / DSM 20300 / JCM 1318 / BCRC 11384 / CCUG 27702 / LMG 3730 / NBRC 12168 / NCIMB 10025 / NRRL B-2784 / 534).